The primary structure comprises 188 residues: Adenine phosphoribosyltransferase (188 aa).

It belongs to the purine/pyrimidine phosphoribosyltransferase family. Homodimer.

The protein localises to the cytoplasm. The catalysed reaction is AMP + diphosphate = 5-phospho-alpha-D-ribose 1-diphosphate + adenine. It functions in the pathway purine metabolism; AMP biosynthesis via salvage pathway; AMP from adenine: step 1/1. Catalyzes a salvage reaction resulting in the formation of AMP, that is energically less costly than de novo synthesis. The polypeptide is Adenine phosphoribosyltransferase (Salinispora arenicola (strain CNS-205)).